We begin with the raw amino-acid sequence, 352 residues long: Sporozoite surface protein P36 (352 aa).

An N-terminal signal peptide occupies residues 1–29 (MKQYEFARHINTYFSVAQNMLFSIFLYYA). 2 6-Cys domains span residues 53-199 (YMCI…IKKA) and 210-351 (YIKG…STKE). Cysteine 57 and cysteine 90 form a disulfide bridge. 5 N-linked (GlcNAc...) asparagine glycosylation sites follow: asparagine 89, asparagine 97, asparagine 111, asparagine 156, and asparagine 160. 5 disulfides stabilise this stretch: cysteine 104-cysteine 179, cysteine 122-cysteine 177, cysteine 214-cysteine 238, cysteine 252-cysteine 333, and cysteine 269-cysteine 331. Residue asparagine 254 is glycosylated (N-linked (GlcNAc...) asparagine).

The protein resides in the cell membrane. It is found in the cell surface. Functionally, involved in sporozoite infection of hepatocytes and replication therein. The protein is Sporozoite surface protein P36 (PBS36) of Plasmodium berghei (strain Anka).